The primary structure comprises 266 residues: UPF0354 protein lmo1608 (266 aa).

It belongs to the UPF0354 family.

The protein is UPF0354 protein lmo1608 of Listeria monocytogenes serovar 1/2a (strain ATCC BAA-679 / EGD-e).